The primary structure comprises 763 residues: MGFLLSAEQVGQFVSNQWQDPYAVLGPQQIEEAGKSFGLVRALVPNARQVWLVERATGQAYPMQPLHPETLFELRFEPGTPLPDYFLRAQRVWDPQGEHLEEWEDPYRFPLEKVNHIGELDRYLFNEGNHHRIYDKLGAHLITVDGVKGVHFAVWAPNARNVSVIGDFNHWDGRQHQMKRLGESGIWAVFIPGIGPGAIYKYEVKTSWGDIYEKSDPYGFQQEVRPKTGSIVADLNTYTWHDQAWLEKRAATDPLRSPISVYEVHLGSWMHASAEDPPAEGQSVLVDQKPNTRFLTYRELADKLIPYVKELGFTHIELLPVAEHPFDGSWGYQVIGYYAVTSRYGSPQDFMYFVDRAHQAGIGVIVDWVPGHFPKDGHGLAFFDGTHLYEYADPRKGEHKGWGTLVFNYGRNEVRNYLVANALFWFEKYHIDGIRVDAVASMLYLDYDRKEWIPNPYGGREHLEAIDFFRQLNTLIFKYNPGALSIAEESTAWPMVTWPTHVGGLGFNLKWNMGWMHDMLDYFHMDPWFRQFHPHLVTFSLMYAFSENYMLAFSHDEVVHGKSHMLGKMPGDHWHKFASLRALYGYMFTHPGKKTLFMSMEFGQWNEWNVWADLDWELLQYEPHAKLRHYVASLNHLLRSEPALYTQDTKPEGFRWIDCSDHRGIVSFIRYGEDPSEWVVVVCNFTPVVWPNYRIGVPERGFYRELLNSDAVEFWGSGVGNLGGKWTDDWAYHNLPYSLELCLPQLSTLVLKWQPPQPVESQN.

Aspartate 437 (nucleophile) is an active-site residue. Glutamate 488 serves as the catalytic Proton donor.

This sequence belongs to the glycosyl hydrolase 13 family. GlgB subfamily. Monomer.

The enzyme catalyses Transfers a segment of a (1-&gt;4)-alpha-D-glucan chain to a primary hydroxy group in a similar glucan chain.. Its pathway is glycan biosynthesis; glycogen biosynthesis. Functionally, catalyzes the formation of the alpha-1,6-glucosidic linkages in glycogen by scission of a 1,4-alpha-linked oligosaccharide from growing alpha-1,4-glucan chains and the subsequent attachment of the oligosaccharide to the alpha-1,6 position. This is 1,4-alpha-glucan branching enzyme GlgB from Synechococcus sp. (strain JA-2-3B'a(2-13)) (Cyanobacteria bacterium Yellowstone B-Prime).